The chain runs to 610 residues: MSTQFDSAPFLKTVTNQPGVYRMYNAEAEVIYVGKAKDLKKRLTSYFRKNLDSEKTKALVSNIAKIDVTVTHTETEALILEHNYIKQYLPKYNVLLRDDKSYPYIFLSAHKHPRLSSHRGAKKRRGEYFGPYPDSGAVRETLHLIQKIFPVRQCEDTVYSNRTRPCLMYQIGRCAGPCVKGLISDQGYQEIVHYLRLFLQGKDNQVLSILVEKMEQASRELRFEDAAKARDQIQAIRRVQEQQFVSDDSLEDLDVLGFAQENGIACIHILMIRQGKVLGSRSHFPKIPSDTSQVEVFESFLSQYYLSHSEARSIPARIILNRGLTEETEALQIAISELAGRKVTFHVNPTGTRGRYLKLANTNALTAITTKMNHKMTISQRFKALQEELGMDAITRMECFDISHTMGESTMASCVVFNQEGPLKQEYRRYNITGITGGDDYAAMAQVLERRYSKQLDSSKIPDIIFIDGGKGQLNRAYEIISSCWQDWPKYPKIIGIAKGVTRKPGLETLITIDGDEFHLPSDAPALHLIQHIRDESHNHAIAGHRAQRGKTRRTSTLEGIEGVGPKRRQALLKYLGGMQELKRASVEEIAKVPGISHALAENIYQALKQ.

The 79-residue stretch at 16–94 (NQPGVYRMYN…IKQYLPKYNV (79 aa)) folds into the GIY-YIG domain. The region spanning 204 to 239 (NQVLSILVEKMEQASRELRFEDAAKARDQIQAIRRV) is the UVR domain.

Belongs to the UvrC family. In terms of assembly, interacts with UvrB in an incision complex.

It is found in the cytoplasm. Its function is as follows. The UvrABC repair system catalyzes the recognition and processing of DNA lesions. UvrC both incises the 5' and 3' sides of the lesion. The N-terminal half is responsible for the 3' incision and the C-terminal half is responsible for the 5' incision. The chain is UvrABC system protein C from Vibrio cholerae serotype O1 (strain ATCC 39315 / El Tor Inaba N16961).